Consider the following 621-residue polypeptide: Very-long-chain aldehyde decarbonylase GL1-5 (621 aa).

The next 5 membrane-spanning stretches (helical) occupy residues 99 to 119 (IILS…GQHL), 126 to 146 (GAGL…YWFH), 186 to 206 (LLFS…IIAF), 224 to 244 (FELV…LMYT), and 332 to 352 (MWPL…SFTV). The Fatty acid hydroxylase domain maps to 138–272 (VEFLYYWFHR…MPFYDYIYNT (135 aa)).

The protein belongs to the sterol desaturase family. As to quaternary structure, homodimer. In terms of tissue distribution, expressed in panicles, developing spikelets, stamens and hulls and, at low levels, in roots, developing seeds, flag leaves and seedling shoots. Strongly expressed in the epidermal cells of anthers.

It localises to the endoplasmic reticulum membrane. It catalyses the reaction a long-chain fatty aldehyde + 2 NADPH + O2 + H(+) = a long-chain alkane + formate + 2 NADP(+) + H2O. In terms of biological role, aldehyde decarbonylase involved in the conversion of aldehydes to alkanes. Core component of a very-long-chain alkane synthesis complex. Required for the biosynthesis of very-long-chain fatty acids (including polyesters) in cuticles, anther tapetum and pollen exine. The polypeptide is Very-long-chain aldehyde decarbonylase GL1-5 (Oryza sativa subsp. japonica (Rice)).